A 265-amino-acid chain; its full sequence is Cytochrome c oxidase subunit 3 (265 aa).

Helical transmembrane passes span 16 to 36 (PWPL…VMYM), 41 to 61 (GGGT…FVWW), 85 to 105 (GIIL…WAFF), 138 to 158 (LILL…LAGL), 162 to 182 (AVYA…FQGI), 200 to 220 (FFLA…FLII), and 242 to 262 (AFYW…IYWW).

It belongs to the cytochrome c oxidase subunit 3 family. As to quaternary structure, component of the cytochrome c oxidase (complex IV, CIV), a multisubunit enzyme composed of a catalytic core of 3 subunits and several supernumerary subunits. The complex exists as a monomer or a dimer and forms supercomplexes (SCs) in the inner mitochondrial membrane with ubiquinol-cytochrome c oxidoreductase (cytochrome b-c1 complex, complex III, CIII).

Its subcellular location is the mitochondrion inner membrane. It catalyses the reaction 4 Fe(II)-[cytochrome c] + O2 + 8 H(+)(in) = 4 Fe(III)-[cytochrome c] + 2 H2O + 4 H(+)(out). In terms of biological role, component of the cytochrome c oxidase, the last enzyme in the mitochondrial electron transport chain which drives oxidative phosphorylation. The respiratory chain contains 3 multisubunit complexes succinate dehydrogenase (complex II, CII), ubiquinol-cytochrome c oxidoreductase (cytochrome b-c1 complex, complex III, CIII) and cytochrome c oxidase (complex IV, CIV), that cooperate to transfer electrons derived from NADH and succinate to molecular oxygen, creating an electrochemical gradient over the inner membrane that drives transmembrane transport and the ATP synthase. Cytochrome c oxidase is the component of the respiratory chain that catalyzes the reduction of oxygen to water. Electrons originating from reduced cytochrome c in the intermembrane space (IMS) are transferred via the dinuclear copper A center (CU(A)) of subunit 2 and heme A of subunit 1 to the active site in subunit 1, a binuclear center (BNC) formed by heme A3 and copper B (CU(B)). The BNC reduces molecular oxygen to 2 water molecules using 4 electrons from cytochrome c in the IMS and 4 protons from the mitochondrial matrix. This Marchantia polymorpha (Common liverwort) protein is Cytochrome c oxidase subunit 3 (COX3).